A 782-amino-acid chain; its full sequence is Endonuclease MutS2 (782 aa).

Position 336–343 (336–343 (GPNTGGKT)) interacts with ATP. The region spanning 707–782 (LDLRGYRYED…GFGVTVATLK (76 aa)) is the Smr domain.

The protein belongs to the DNA mismatch repair MutS family. MutS2 subfamily. In terms of assembly, homodimer. Binds to stalled ribosomes, contacting rRNA.

Its function is as follows. Endonuclease that is involved in the suppression of homologous recombination and thus may have a key role in the control of bacterial genetic diversity. Functionally, acts as a ribosome collision sensor, splitting the ribosome into its 2 subunits. Detects stalled/collided 70S ribosomes which it binds and splits by an ATP-hydrolysis driven conformational change. Acts upstream of the ribosome quality control system (RQC), a ribosome-associated complex that mediates the extraction of incompletely synthesized nascent chains from stalled ribosomes and their subsequent degradation. Probably generates substrates for RQC. This chain is Endonuclease MutS2, found in Staphylococcus aureus (strain MSSA476).